The chain runs to 162 residues: NADH-quinone oxidoreductase subunit I (162 aa).

4Fe-4S ferredoxin-type domains are found at residues 52-82 and 93-122; these read LRRYPNGEERCIACKLCEAICPAQAITIEAG and TRYDIDMVKCIYCGMCQEACPVDAIVEGPN. [4Fe-4S] cluster contacts are provided by Cys62, Cys65, Cys68, Cys72, Cys102, Cys105, Cys108, and Cys112.

It belongs to the complex I 23 kDa subunit family. As to quaternary structure, NDH-1 is composed of 14 different subunits. Subunits NuoA, H, J, K, L, M, N constitute the membrane sector of the complex. [4Fe-4S] cluster is required as a cofactor.

The protein resides in the cell inner membrane. The enzyme catalyses a quinone + NADH + 5 H(+)(in) = a quinol + NAD(+) + 4 H(+)(out). In terms of biological role, NDH-1 shuttles electrons from NADH, via FMN and iron-sulfur (Fe-S) centers, to quinones in the respiratory chain. The immediate electron acceptor for the enzyme in this species is believed to be ubiquinone. Couples the redox reaction to proton translocation (for every two electrons transferred, four hydrogen ions are translocated across the cytoplasmic membrane), and thus conserves the redox energy in a proton gradient. This chain is NADH-quinone oxidoreductase subunit I, found in Methylorubrum extorquens (strain PA1) (Methylobacterium extorquens).